Here is a 933-residue protein sequence, read N- to C-terminus: Dual 3',5'-cyclic-AMP and -GMP phosphodiesterase 11A (933 aa).

Residues 42–125 (HSQGQGALGP…ASQKELRKSF (84 aa)) form a disordered region. A phosphoserine mark is found at Ser-162, Ser-163, and Ser-239. GAF domains are found at residues 217 to 370 (DLTS…GIAI) and 402 to 558 (DLEK…GLGI). Ser-424 provides a ligand contact to 3',5'-cyclic GMP. Residues 588–912 (SKAEVDKFKA…SKWEELHQKR (325 aa)) enclose the PDEase domain. Residue His-664 is the Proton donor of the active site. His-668, His-704, Asp-705, and Asp-816 together coordinate a divalent metal cation.

It belongs to the cyclic nucleotide phosphodiesterase family. A divalent metal cation serves as cofactor. In terms of tissue distribution, isoform 1 is present in prostate, pituitary, heart and liver. It is however not present in testis nor in penis, suggesting that weak inhibition by Tadalafil (Cialis) is not relevant (at protein level). Isoform 2 may be expressed in testis. Isoform 4 is expressed in adrenal cortex.

It localises to the cytoplasm. Its subcellular location is the cytosol. The catalysed reaction is 3',5'-cyclic GMP + H2O = GMP + H(+). The enzyme catalyses 3',5'-cyclic AMP + H2O = AMP + H(+). Its activity is regulated as follows. Inhibited by 3-isobutyl-1-methylxanthine (IBMX), zaprinast and dipyridamole. cGMP acts as an allosteric activator. Weakly inhibited by Sildenafil (Viagra) and Tadalafil (Cialis); however, the fact that the protein is probably absent from testis, suggests that it is not biologically relevant and is not related with erectile dysfunction. Plays a role in signal transduction by regulating the intracellular concentration of cyclic nucleotides cAMP and cGMP. Catalyzes the hydrolysis of both cAMP and cGMP to 5'-AMP and 5'-GMP, respectively. In Homo sapiens (Human), this protein is Dual 3',5'-cyclic-AMP and -GMP phosphodiesterase 11A.